Reading from the N-terminus, the 1123-residue chain is Inner tegument protein (1123 aa).

2 disordered regions span residues 1–27 and 1047–1123; these read MADRGLPSEAPVVTTSPAGPPSDGPMQ and RPLA…TSYQ. Positions 568–1123 are interaction with large tegument protein; it reads WDITPTTPAT…PTDLPLTSYQ (556 aa).

This sequence belongs to the herpesviridae inner tegument protein family. Interacts (via C-terminus) with the large tegument protein/LTP (via N-terminus). Interacts with host DST. Interacts with host RIGI; this interaction inhibits RIGI activation. Interacts with host CGAS; this interaction inhibits host CGAS activation. Interacts with host TAOK3.

The protein localises to the virion tegument. The protein resides in the host cytoplasm. It is found in the host nucleus. It localises to the host Golgi apparatus. Its subcellular location is the host trans-Golgi network. The catalysed reaction is L-asparaginyl-[protein] + H2O = L-aspartyl-[protein] + NH4(+). The enzyme catalyses L-glutaminyl-[protein] + H2O = L-glutamyl-[protein] + NH4(+). Its function is as follows. Plays an essential role in cytoplasmic secondary envelopment during viral egress. Interacts with the capsid via the large tegument protein/LTP and participates in its transport to the host trans-Golgi network (TGN) where secondary envelopment occurs. Modulates tegumentation and capsid accumulation at the viral assembly complex. Plays a role in microtubule-based retrograde axonal transport to promote neuroinvasion. Also plays a role in the inhibition of host immune response by acting as a viral deamidase. Deamidates host RIGI on two asparagines which becomes unable to sense viral dsRNA. In turn, its ability to trigger antiviral immune response and restrict viral replication is inhibited. Also deamidates a critical asparagine on host CGAS which abolishes cGAMP synthesis and downstream innate immune activation. The chain is Inner tegument protein (UL37) from Homo sapiens (Human).